The chain runs to 709 residues: MTATHRGAQADASAPAGPLPPEAAAKRVAWLRDELDRHNYQYYVLDAPTIPDAEYDALFSELQALELEHPELQTPDSPTQRVGGEPLSAFDSVRHRVPMLSLNNGFADDDVLNFDRRCAQGLGRTAPAAGEQDLFSAADAVEYACELKFDGLAMSLRYEDGRLVQAATRGDGETGEDVTVNVRTIKAIPLKLRGQAPAVLEVRGEVFMYRGDFDKLNERQAEAGEKTFVNPRNAAAGSLRQLDPRITAKRPLSFFAYGLGELQGVDRPPTHSAMLDGFAALGLPVCKDRAVVKGAQGLLDFYRDIGQRRDALPYDIDGVVYKVNALAEQERLGFVSRAPRFALAHKFPAQEMTTIVEDIEVQVGRTGAITPVARLKPVFVGGVTVTNATLHNEDEIRRKDVHIGDTVIVRRAGDVIPEVVAVVTERRPDDARAFVMPTACPVCGSHIEKLEDEAIARCTGGLICAAQRKQALLHFAQRRAMDIEGLGDKLVEQLVDQGIVRTPADLFKLGVAKLAALERMADKSAANLVAAIDASRETTMNRFIFALGIRHVGEATAKDLARHFGKLDALMAADEAALLEVNDVGPVVAQSIAHFFAEPHNVEVIEQLRAAGVHWTESEPVAKAPAPLSGKTFVLTGTLPTMSREDAKELLEAAGAKVAGSVSKKTDYVVAGAEAGSKLDKAEALGVPVLDEAGMLALLAEAGAAPAQE.

Residues 1–20 form a disordered region; it reads MTATHRGAQADASAPAGPLP. Residues 52 to 56, 101 to 102, and Glu146 each bind NAD(+); these read DAEYD and SL. The N6-AMP-lysine intermediate role is filled by Lys148. The NAD(+) site is built by Arg169, Glu205, Lys322, and Lys346. Residues Cys440, Cys443, Cys458, and Cys464 each coordinate Zn(2+). The BRCT domain maps to 623–709; sequence KAPAPLSGKT…AEAGAAPAQE (87 aa).

The protein belongs to the NAD-dependent DNA ligase family. LigA subfamily. Mg(2+) is required as a cofactor. It depends on Mn(2+) as a cofactor.

It catalyses the reaction NAD(+) + (deoxyribonucleotide)n-3'-hydroxyl + 5'-phospho-(deoxyribonucleotide)m = (deoxyribonucleotide)n+m + AMP + beta-nicotinamide D-nucleotide.. Functionally, DNA ligase that catalyzes the formation of phosphodiester linkages between 5'-phosphoryl and 3'-hydroxyl groups in double-stranded DNA using NAD as a coenzyme and as the energy source for the reaction. It is essential for DNA replication and repair of damaged DNA. In Cupriavidus necator (strain ATCC 17699 / DSM 428 / KCTC 22496 / NCIMB 10442 / H16 / Stanier 337) (Ralstonia eutropha), this protein is DNA ligase.